Reading from the N-terminus, the 335-residue chain is Glyceraldehyde-3-phosphate dehydrogenase 2 (335 aa).

NAD(+)-binding positions include 13-14, aspartate 35, and arginine 80; that span reads RI. Phosphoserine occurs at positions 125 and 151. 151–153 contributes to the D-glyceraldehyde 3-phosphate binding site; that stretch reads SCT. Cysteine 152 (nucleophile) is an active-site residue. A phosphothreonine mark is found at threonine 153, threonine 154, threonine 182, and threonine 184. Threonine 182 serves as a coordination point for D-glyceraldehyde 3-phosphate. 3 positions are modified to phosphoserine: serine 192, serine 203, and serine 209. Phosphothreonine is present on threonine 211. D-glyceraldehyde 3-phosphate-binding positions include 211–212 and arginine 234; that span reads TG. A Phosphothreonine modification is found at threonine 237. Serine 241 bears the Phosphoserine mark. Position 316 (asparagine 316) interacts with NAD(+).

This sequence belongs to the glyceraldehyde-3-phosphate dehydrogenase family. As to quaternary structure, homotetramer.

The protein resides in the cytoplasm. It catalyses the reaction D-glyceraldehyde 3-phosphate + phosphate + NAD(+) = (2R)-3-phospho-glyceroyl phosphate + NADH + H(+). It participates in carbohydrate degradation; glycolysis; pyruvate from D-glyceraldehyde 3-phosphate: step 1/5. This is Glyceraldehyde-3-phosphate dehydrogenase 2 (gpd3) from Schizosaccharomyces pombe (strain 972 / ATCC 24843) (Fission yeast).